Here is a 42-residue protein sequence, read N- to C-terminus: Photosystem I reaction center subunit IX (42 aa).

A helical transmembrane segment spans residues 7-27; sequence FLSSAPVLIMALLTFTAGILI.

It belongs to the PsaJ family.

The protein resides in the cellular thylakoid membrane. Functionally, may help in the organization of the PsaE and PsaF subunits. The polypeptide is Photosystem I reaction center subunit IX (Microcystis aeruginosa (strain NIES-843 / IAM M-2473)).